The primary structure comprises 319 residues: 4-diphosphocytidyl-2-C-methyl-D-erythritol kinase (319 aa).

Residue Lys21 is part of the active site. Residue 106–116 (PIGAGLAGGSS) coordinates ATP. Asp148 is a catalytic residue.

It belongs to the GHMP kinase family. IspE subfamily.

The enzyme catalyses 4-CDP-2-C-methyl-D-erythritol + ATP = 4-CDP-2-C-methyl-D-erythritol 2-phosphate + ADP + H(+). Its pathway is isoprenoid biosynthesis; isopentenyl diphosphate biosynthesis via DXP pathway; isopentenyl diphosphate from 1-deoxy-D-xylulose 5-phosphate: step 3/6. Functionally, catalyzes the phosphorylation of the position 2 hydroxy group of 4-diphosphocytidyl-2C-methyl-D-erythritol. The sequence is that of 4-diphosphocytidyl-2-C-methyl-D-erythritol kinase from Prochlorococcus marinus (strain MIT 9303).